A 378-amino-acid chain; its full sequence is Protein FAM170B (378 aa).

Disordered stretches follow at residues 1-56 (MKHH…LPDD), 244-265 (TRDQ…DSSE), and 277-378 (QQQP…QQGK). Composition is skewed to low complexity over residues 277-339 (QQQP…QPLQ) and 349-378 (PQKQ…QQGK).

The protein belongs to the FAM170 family. As to quaternary structure, interacts with GOPC. Exclusively expressed in adult testis (at protein level). Expression first started at postnatal week 3 in round spermatids, elongated spermatids and mature sperm.

Its subcellular location is the cytoplasmic vesicle. The protein localises to the secretory vesicle. It localises to the acrosome. The protein resides in the acrosome outer membrane. In terms of biological role, plays a role in fertilization through the acrosome reaction. This is Protein FAM170B from Mus musculus (Mouse).